Here is a 101-residue protein sequence, read N- to C-terminus: Putative protein p25 (101 aa).

The sequence is that of Putative protein p25 (25) from Acyrthosiphon pisum secondary endosymbiont phage 1 (Bacteriophage APSE-1).